The primary structure comprises 624 residues: 1-deoxy-D-xylulose-5-phosphate synthase (624 aa).

Thiamine diphosphate-binding positions include histidine 74 and glycine 115–serine 117. Aspartate 146 lines the Mg(2+) pocket. Residues glycine 147–alanine 148, asparagine 175, tyrosine 286, and glutamate 367 contribute to the thiamine diphosphate site. Asparagine 175 contributes to the Mg(2+) binding site.

This sequence belongs to the transketolase family. DXPS subfamily. Homodimer. Requires Mg(2+) as cofactor. Thiamine diphosphate is required as a cofactor.

It carries out the reaction D-glyceraldehyde 3-phosphate + pyruvate + H(+) = 1-deoxy-D-xylulose 5-phosphate + CO2. The protein operates within metabolic intermediate biosynthesis; 1-deoxy-D-xylulose 5-phosphate biosynthesis; 1-deoxy-D-xylulose 5-phosphate from D-glyceraldehyde 3-phosphate and pyruvate: step 1/1. Functionally, catalyzes the acyloin condensation reaction between C atoms 2 and 3 of pyruvate and glyceraldehyde 3-phosphate to yield 1-deoxy-D-xylulose-5-phosphate (DXP). The protein is 1-deoxy-D-xylulose-5-phosphate synthase of Alkaliphilus oremlandii (strain OhILAs) (Clostridium oremlandii (strain OhILAs)).